Here is a 443-residue protein sequence, read N- to C-terminus: KH domain-containing, RNA-binding, signal transduction-associated protein 1 (443 aa).

Residues 1–94 (MQRRDDPASR…PLLPPSATAA (94 aa)) are disordered. Residues Ser-18 and Ser-20 each carry the phosphoserine modification. Lys-21 is subject to N6-acetyllysine. Ser-29 carries the phosphoserine modification. Residue Thr-33 is modified to Phosphothreonine. Arg-45 and Arg-52 each carry asymmetric dimethylarginine; by PRMT1. Ser-58 is subject to Phosphoserine; by MAPK1. Residues 61 to 72 (TQPPPLLPPSTP) are compositionally biased toward pro residues. Thr-71 and Thr-84 each carry phosphothreonine; by MAPK1. The span at 81–94 (SAPTPLLPPSATAA) shows a compositional bias: low complexity. Glycyl lysine isopeptide (Lys-Gly) (interchain with G-Cter in SUMO2) cross-links involve residues Lys-96 and Lys-102. Residues 100 to 260 (ENKYLPELMA…VKKFLVPDMM (161 aa)) form an involved in homodimerization region. At Ser-113 the chain carries Phosphoserine. Lys-139 participates in a covalent cross-link: Glycyl lysine isopeptide (Lys-Gly) (interchain with G-Cter in SUMO2). Ser-150 is modified (phosphoserine). One can recognise a KH domain in the interval 171 to 197 (NFVGKILGPQGNTIKRLQEETGAKISV). At Lys-175 the chain carries N6-acetyllysine; alternate. Lys-175 is covalently cross-linked (Glycyl lysine isopeptide (Lys-Gly) (interchain with G-Cter in SUMO2); alternate). Thr-183 carries the post-translational modification Phosphothreonine. The segment at 280–317 (PSRGRGVSVRGRGAAPPPPPVPRGRGVGPPRGALVRGT) is disordered. Omega-N-methylarginine occurs at positions 282, 284, and 291. Residues 283–293 (GRGVSVRGRGA) show a composition bias toward low complexity. Arg-304 carries the asymmetric dimethylarginine modification. A compositionally biased stretch (low complexity) spans 307–316 (GPPRGALVRG). 2 positions are modified to omega-N-methylarginine; by PRMT1: Arg-310 and Arg-315. Arg-320 carries the post-translational modification Dimethylated arginine; alternate. Position 320 is an omega-N-methylarginine; by PRMT1; alternate (Arg-320). Omega-N-methylarginine; by PRMT1 is present on Arg-325. Positions 326-345 (GATVTRGVPPPPTVRGAPTP) are disordered. Dimethylated arginine; alternate occurs at positions 331 and 340. 2 positions are modified to omega-N-methylarginine; by PRMT1; alternate: Arg-331 and Arg-340. An Asymmetric dimethylarginine; alternate modification is found at Arg-331. An interaction with HNRNPA1 region spans residues 351–443 (GIQRIPLPPT…AYREHPYGRY (93 aa)). A Phosphotyrosine modification is found at Tyr-387. Ser-390 is subject to Phosphoserine. An interaction with ZBTB7A region spans residues 400–420 (GHGELQDSYEAYGQDDWNGTR). The interval 411–443 (YGQDDWNGTRPSLKAPPARPVKGAYREHPYGRY) is disordered. Lys-432 participates in a covalent cross-link: Glycyl lysine isopeptide (Lys-Gly) (interchain with G-Cter in SUMO2). Basic and acidic residues predominate over residues 434–443 (AYREHPYGRY). Phosphotyrosine; by PTK6 is present on residues Tyr-435, Tyr-440, and Tyr-443.

This sequence belongs to the KHDRBS family. Self-associates to form homooligomers when bound to RNA, oligomerization appears to be limited when binding to proteins. Forms a trimeric complex in the nucleus consisting of BANP, HDAC6 and KHDRBS1/SAM68; HDAC6 keeps KHDRBS1 in a deacetylated state which inhibits the inclusion of CD44 alternate exons. The complex is disrupted by MAPK1/MAPK3-mediated phosphorylation of BANP which results in BANP export to the cytoplasm. This facilitates acetylation of KHDRBS1 and CD44 variant exon inclusion. Interacts with KHDRBS3/SLIM-2 and KHDRBS2/SLIM-1; heterooligomer formation of KHDRBS family proteins may modulate RNA substrate specificity. Interacts with RASA1, FYN, GRB2, PLCG1, SRC, CBP and PRMT1. Interacts with PTK6 (via SH3 and SH2 domains). Forms a complex with ILF2, ILF3, YLPM1, RBMX, NCOA5 and PPP1CA. Binds WBP4/FBP21 (via WW domains), FNBP4/FBP30 (via WW domains). Interacts (via Arg/Gly-rich-flanked Pro-rich regions) with FYN (via the SH3 domain). Interacts with APC, HNRNPA1. Interacts with the non-receptor tyrosine kinase SRMS; the interaction leads to phosphorylation of KHDRBS1. Interacts with ZBTB7A; negatively regulates KHDRBS1 splicing activity toward BCL2L1. Tyrosine phosphorylated by several non-receptor tyrosine kinases including LCK, FYN and JAK3. Also tyrosine phosphorylated by the non-receptor tyrosine kinase SRMS in an EGF-dependent manner. Phosphorylation by PTK6 negatively regulates its RNA binding ability. Phosphorylation by PTK6 at Tyr-440 dictates the nuclear localization of KHDRBS1. Phosphorylation by MAPK1 at Ser-58, Thr-71 and Thr-84 regulates CD44 alternative splicing by promoting CD44 exon v5 inclusion. In terms of processing, acetylated. Positively correlates with ability to bind RNA. Deacetylated by HDAC6; this regulates alternative splicing by inhibiting the inclusion of CD44 alternate exons. Post-translationally, arginine methylation is required for nuclear localization. Inhibits interaction with Src-like SH3 domains, but not interaction with WW domains of WBP4/FBP21 and FNBP4/FBP30. In terms of tissue distribution, in adult cerebellum expressed in most neuronal cell populations, specifically in cerebellar granule cells of the internal granular layer, ROR(alpha)-positive Purkinje cells, internal granular layer and molecular layer interneurons (at protein level).

It localises to the nucleus. It is found in the cytoplasm. The protein localises to the membrane. Functionally, recruited and tyrosine phosphorylated by several receptor systems, for example the T-cell, leptin and insulin receptors. Once phosphorylated, functions as an adapter protein in signal transduction cascades by binding to SH2 and SH3 domain-containing proteins. Role in G2-M progression in the cell cycle. Represses CBP-dependent transcriptional activation apparently by competing with other nuclear factors for binding to CBP. Also acts as a putative regulator of mRNA stability and/or translation rates and mediates mRNA nuclear export. Positively regulates the association of constitutive transport element (CTE)-containing mRNA with large polyribosomes and translation initiation. May not be involved in the nucleocytoplasmic export of unspliced (CTE)-containing RNA species. RNA-binding protein that plays a role in the regulation of alternative splicing and influences mRNA splice site selection and exon inclusion. Binds to RNA containing 5'-[AU]UAA-3' as a bipartite motif spaced by more than 15 nucleotides. Binds poly(A). In cooperation with HNRNPA1 modulates alternative splicing of BCL2L1 by promoting splicing toward isoform Bcl-X(S), and of SMN1. Can regulate CD44 alternative splicing in a Ras pathway-dependent manner. Can regulate alternative splicing of NRXN1 and NRXN3 in the laminin G-like domain 6 containing the evolutionary conserved neurexin alternative spliced segment 4 (AS4) involved in neurexin selective targeting to postsynaptic partners. In a neuronal activity-dependent manner cooperates synergistically with KHDRBS2/SLIM-1 in regulation of NRXN1 exon skipping at AS4. The cooperation with KHDRBS2/SLIM-1 is antagonistic for regulation of NXRN3 alternative splicing at AS4. This Mus musculus (Mouse) protein is KH domain-containing, RNA-binding, signal transduction-associated protein 1.